A 261-amino-acid polypeptide reads, in one-letter code: Cytochrome c oxidase subunit 3 (261 aa).

The Mitochondrial matrix portion of the chain corresponds to 1-15 (MTNQLHPFHMTNPSP). The chain crosses the membrane as a helical span at residues 16 to 34 (WPLTGATAALLMTSGLIMW). Over 35–40 (FHYNSS) the chain is Mitochondrial intermembrane. A helical transmembrane segment spans residues 41 to 66 (QLIMLGLLIMLLTLTQWWRDIVREST). Topologically, residues 67 to 72 (FQGHHT) are mitochondrial matrix. Residues 73–105 (PSVQNNLRYGMILFITSEILFFTGFFWAFYHSS) traverse the membrane as a helical segment. The Mitochondrial intermembrane segment spans residues 106 to 128 (LSPTAELGNIWPPTGITPLNPFE). A helical transmembrane segment spans residues 129 to 152 (VPLLNTAVLLASGVTITWAHHSLM). Over 153-155 (EGN) the chain is Mitochondrial matrix. A helical transmembrane segment spans residues 156-183 (RPQTLQALTLTIILGTYFTILQAMEYFE). Over 184–190 (ASFTIAD) the chain is Mitochondrial intermembrane. The helical transmembrane segment at 191–223 (SIYGSTFFVATGFHGLHVIIGSTFLIVCLMRQL) threads the bilayer. The Mitochondrial matrix segment spans residues 224-232 (KYHFTSHHH). A helical membrane pass occupies residues 233-256 (FGFEAAAWYWHFVDVIWLFLYLSI). The Mitochondrial intermembrane segment spans residues 257–261 (YWWGS).

This sequence belongs to the cytochrome c oxidase subunit 3 family. Component of the cytochrome c oxidase (complex IV, CIV), a multisubunit enzyme composed of 14 subunits. The complex is composed of a catalytic core of 3 subunits MT-CO1, MT-CO2 and MT-CO3, encoded in the mitochondrial DNA, and 11 supernumerary subunits COX4I, COX5A, COX5B, COX6A, COX6B, COX6C, COX7A, COX7B, COX7C, COX8 and NDUFA4, which are encoded in the nuclear genome. The complex exists as a monomer or a dimer and forms supercomplexes (SCs) in the inner mitochondrial membrane with NADH-ubiquinone oxidoreductase (complex I, CI) and ubiquinol-cytochrome c oxidoreductase (cytochrome b-c1 complex, complex III, CIII), resulting in different assemblies (supercomplex SCI(1)III(2)IV(1) and megacomplex MCI(2)III(2)IV(2)).

Its subcellular location is the mitochondrion inner membrane. It carries out the reaction 4 Fe(II)-[cytochrome c] + O2 + 8 H(+)(in) = 4 Fe(III)-[cytochrome c] + 2 H2O + 4 H(+)(out). Functionally, component of the cytochrome c oxidase, the last enzyme in the mitochondrial electron transport chain which drives oxidative phosphorylation. The respiratory chain contains 3 multisubunit complexes succinate dehydrogenase (complex II, CII), ubiquinol-cytochrome c oxidoreductase (cytochrome b-c1 complex, complex III, CIII) and cytochrome c oxidase (complex IV, CIV), that cooperate to transfer electrons derived from NADH and succinate to molecular oxygen, creating an electrochemical gradient over the inner membrane that drives transmembrane transport and the ATP synthase. Cytochrome c oxidase is the component of the respiratory chain that catalyzes the reduction of oxygen to water. Electrons originating from reduced cytochrome c in the intermembrane space (IMS) are transferred via the dinuclear copper A center (CU(A)) of subunit 2 and heme A of subunit 1 to the active site in subunit 1, a binuclear center (BNC) formed by heme A3 and copper B (CU(B)). The BNC reduces molecular oxygen to 2 water molecules using 4 electrons from cytochrome c in the IMS and 4 protons from the mitochondrial matrix. This is Cytochrome c oxidase subunit 3 (MT-CO3) from Pelomedusa subrufa (African side-necked turtle).